The primary structure comprises 299 residues: Ribosomal protein L11 methyltransferase (299 aa).

4 residues coordinate S-adenosyl-L-methionine: threonine 152, glycine 172, aspartate 194, and asparagine 234.

Belongs to the methyltransferase superfamily. PrmA family.

The protein localises to the cytoplasm. It catalyses the reaction L-lysyl-[protein] + 3 S-adenosyl-L-methionine = N(6),N(6),N(6)-trimethyl-L-lysyl-[protein] + 3 S-adenosyl-L-homocysteine + 3 H(+). Its function is as follows. Methylates ribosomal protein L11. In Geobacter sulfurreducens (strain ATCC 51573 / DSM 12127 / PCA), this protein is Ribosomal protein L11 methyltransferase.